Reading from the N-terminus, the 506-residue chain is MNTITLTPGQLSLSQLYDVWRHPVQLRLDASAIDGINASVACVNDIVAEGRTAYGINTGFGLLAQTRIADEDLQNLQRSLVLSHAAGVGDPLDDAMVRLIMVLKINSLARGFSGIRLSVIEALIALVNAGVYPLIPAKGSVGASGDLAPLAHLSLTLLGEGKARWQGEWLPAQTALKKAGLEPVALAAKEGLALLNGTQASTAFALRGLFEAQELFASAVVCGALTTEAVLGSRRPFDARIHAARGQQGQIDVARLFRHLLTDTSAIAESHHHCHKVQDPYSLRCQPQVMGACLTQLRQTKEVLLAEANAVSDNPLVFADAGEVISGGNFHAEPVAMAADNLALAIAEIGALSERRIALMMDKHMSQLPPFLVKNGGVNSGFMIAQVTAAALASENKALAHPHSVDSLPTSANQEDHVSMAPAAGRRLWEMAANTRGIIAVEWLAACQGIDLREGLTSSPLLEQARQTLRERVAHYTQDRFFAPDIECATALLAQGALQRLVPDFM.

Positions 143–145 (ASG) form a cross-link, 5-imidazolinone (Ala-Gly). The residue at position 144 (serine 144) is a 2,3-didehydroalanine (Ser).

It belongs to the PAL/histidase family. In terms of processing, contains an active site 4-methylidene-imidazol-5-one (MIO), which is formed autocatalytically by cyclization and dehydration of residues Ala-Ser-Gly.

It is found in the cytoplasm. The enzyme catalyses L-histidine = trans-urocanate + NH4(+). The protein operates within amino-acid degradation; L-histidine degradation into L-glutamate; N-formimidoyl-L-glutamate from L-histidine: step 1/3. The sequence is that of Histidine ammonia-lyase from Salmonella schwarzengrund (strain CVM19633).